We begin with the raw amino-acid sequence, 88 residues long: Conotoxin VxVIB (88 aa).

A signal peptide spans 1-22 (MNLACVLIVAVLFLTASQLATA). Residues 23 to 52 (ASYARDKQEYPAVRSSDEMQDSEDLTLTKE) constitute a propeptide that is removed on maturation. Disulfide bonds link C53-C68, C60-C72, and C67-C81.

In terms of tissue distribution, expressed by the venom duct.

It localises to the secreted. Functionally, may act as a neurotoxin, but produces no obvious effect on ionic currents when tested on the mouse dorsal rooted ganglia (DRG). This chain is Conotoxin VxVIB, found in Conus vexillum (Flag cone).